The following is a 269-amino-acid chain: Aquaporin-1 (269 aa).

At 1–11 (MASEFKKKLFW) the chain is on the cytoplasmic side. A helical transmembrane segment spans residues 12 to 29 (RAVVAEFLAMTLFVFISI). At 30-46 (GSALGFKYPVGNNQTAV) the chain is on the extracellular side. N-linked (GlcNAc...) asparagine glycosylation occurs at Asn42. The chain crosses the membrane as a helical span at residues 47–65 (QDNVKVSLAFGLSIATLAQ). Over 66–68 (SVG) the chain is Cytoplasmic. An intramembrane segment occupies 69-82 (HISGAHLNPAVTLG). Residues 76–78 (NPA) carry the NPA 1 motif. Over 83 to 90 (LLLSCQIS) the chain is Cytoplasmic. A helical transmembrane segment spans residues 91 to 109 (IFRALMYIIAQCVGAIVAT). Over 110 to 133 (AILSGITSSLPGNSLGRNDLADGV) the chain is Extracellular. The helical transmembrane segment at 134–153 (NSGQGLGIEIIGTLQLVLCV) threads the bilayer. At 154-163 (LATTDRRRRD) the chain is on the cytoplasmic side. Residues 164 to 181 (LGGSAPLAIGLSVALGHL) form a helical membrane-spanning segment. The Extracellular portion of the chain corresponds to 182–186 (LAIDY). An intramembrane segment occupies 187 to 199 (TGCGINPARSFGS). Positions 192–194 (NPA) match the NPA 2 motif. Residues 200 to 206 (AVITHNF) are Extracellular-facing. Asn205 carries an N-linked (GlcNAc...) asparagine glycan. Residues 207–224 (SNHWIFWVGPFIGGALAV) form a helical membrane-spanning segment. Residues 225–269 (LIYDFILAPRSSDFTDRVKVWTSGQVEEYDLDADDINSRVEMKPK) are Cytoplasmic-facing. Ser247 carries the post-translational modification Phosphoserine. At Tyr253 the chain carries Phosphotyrosine. Ser262 is modified (phosphoserine).

Belongs to the MIP/aquaporin (TC 1.A.8) family. In terms of assembly, homotetramer; each monomer provides an independent water pore. Component of the ankyrin-1 complex in the erythrocyte, composed of ANK1, RHCE, RHAG, SLC4A1, EPB42, GYPA, GYPB and AQP1. Interacts with EPHB2; involved in endolymph production in the inner ear. Identified in a complex with STOM. Interacts (via the N-terminal) with ANK1 (via ANK 1-5 repeats). Interacts (via the C-terminal) with EPB42.

Its subcellular location is the cell membrane. It catalyses the reaction H2O(in) = H2O(out). The enzyme catalyses nitric oxide(out) = nitric oxide(in). It carries out the reaction CO2(out) = CO2(in). The catalysed reaction is glycerol(in) = glycerol(out). It catalyses the reaction H2O2(out) = H2O2(in). The enzyme catalyses K(+)(in) = K(+)(out). It carries out the reaction Na(+)(in) = Na(+)(out). Forms a water channel that facilitates the transport of water across cell membranes, playing a crucial role in water homeostasis in various tissues. Could also be permeable to small solutes including hydrogen peroxide, glycerol and gases such as amonnia (NH3), nitric oxide (NO) and carbon dioxide (CO2). Recruited to the ankyrin-1 complex, a multiprotein complex of the erythrocyte membrane, it could be part of a CO2 metabolon, linking facilitated diffusion of CO2 across the membrane, anion exchange of Cl(-)/HCO3(-) and interconversion of dissolved CO2 and carbonic acid in the cytosol. In vitro, it shows non-selective gated cation channel activity and may be permeable to cations like K(+) and Na(+) in vivo. This is Aquaporin-1 from Pongo abelii (Sumatran orangutan).